Here is a 164-residue protein sequence, read N- to C-terminus: ATP synthase subunit b (164 aa).

The helical transmembrane segment at 10-30 threads the bilayer; the sequence is LLISQIVNFCLLAFLLNTFLY.

It belongs to the ATPase B chain family. In terms of assembly, F-type ATPases have 2 components, F(1) - the catalytic core - and F(0) - the membrane proton channel. F(1) has five subunits: alpha(3), beta(3), gamma(1), delta(1), epsilon(1). F(0) has three main subunits: a(1), b(2) and c(10-14). The alpha and beta chains form an alternating ring which encloses part of the gamma chain. F(1) is attached to F(0) by a central stalk formed by the gamma and epsilon chains, while a peripheral stalk is formed by the delta and b chains.

Its subcellular location is the cell membrane. Functionally, f(1)F(0) ATP synthase produces ATP from ADP in the presence of a proton or sodium gradient. F-type ATPases consist of two structural domains, F(1) containing the extramembraneous catalytic core and F(0) containing the membrane proton channel, linked together by a central stalk and a peripheral stalk. During catalysis, ATP synthesis in the catalytic domain of F(1) is coupled via a rotary mechanism of the central stalk subunits to proton translocation. In terms of biological role, component of the F(0) channel, it forms part of the peripheral stalk, linking F(1) to F(0). In Herpetosiphon aurantiacus (strain ATCC 23779 / DSM 785 / 114-95), this protein is ATP synthase subunit b.